The following is a 343-amino-acid chain: Protein FAM50A-B (343 aa).

Disordered regions lie at residues 1-25 (MAQY…EKQR) and 125-181 (EEDE…EEEN). The segment covering 125 to 142 (EEDEECEDEESEEEEEEY) has biased composition (acidic residues). Positions 172–181 (PDRDREEEEN) are enriched in basic and acidic residues.

Belongs to the FAM50 family.

Its subcellular location is the nucleus. Its function is as follows. Probably involved in the regulation of pre-mRNA splicing. The chain is Protein FAM50A-B (fam50a-b) from Xenopus laevis (African clawed frog).